A 55-amino-acid chain; its full sequence is MAKPASIKIRLNSTADTGFFYVTKKNARTKTEKMVLKKYDPVIRKHVEFKEGKIK.

The protein belongs to the bacterial ribosomal protein bL33 family.

The protein is Large ribosomal subunit protein bL33 of Caulobacter sp. (strain K31).